Consider the following 64-residue polypeptide: Large ribosomal subunit protein bL35 (64 aa).

The tract at residues 17–41 is disordered; the sequence is TGSGKVKRERMNGSHNLEHKNRKRT. Positions 25–35 are enriched in basic and acidic residues; sequence ERMNGSHNLEH.

The protein belongs to the bacterial ribosomal protein bL35 family.

This is Large ribosomal subunit protein bL35 from Chlorobaculum parvum (strain DSM 263 / NCIMB 8327) (Chlorobium vibrioforme subsp. thiosulfatophilum).